Consider the following 348-residue polypeptide: Protein pelota homolog (348 aa).

This sequence belongs to the eukaryotic release factor 1 family. Pelota subfamily. Monomer. It depends on a divalent metal cation as a cofactor.

It is found in the cytoplasm. May function in recognizing stalled ribosomes, interact with stem-loop structures in stalled mRNA molecules, and effect endonucleolytic cleavage of the mRNA. May play a role in the release non-functional ribosomes and degradation of damaged mRNAs. Has endoribonuclease activity. This Methanococcus maripaludis (strain C7 / ATCC BAA-1331) protein is Protein pelota homolog.